Reading from the N-terminus, the 266-residue chain is Large ribosomal subunit protein eL8 (266 aa).

Residues lysine 11, lysine 20, and lysine 21 each participate in a glycyl lysine isopeptide (Lys-Gly) (interchain with G-Cter in SUMO2) cross-link. Lysine 34 carries the post-translational modification N6-acetyllysine. Lysine 48 participates in a covalent cross-link: Glycyl lysine isopeptide (Lys-Gly) (interchain with G-Cter in SUMO2). Lysine 97 is modified (N6-acetyllysine; alternate). A Glycyl lysine isopeptide (Lys-Gly) (interchain with G-Cter in SUMO2); alternate cross-link involves residue lysine 97. Lysine 125 is covalently cross-linked (Glycyl lysine isopeptide (Lys-Gly) (interchain with G-Cter in SUMO2)). Lysine 217 carries the N6-acetyllysine modification. A Glycyl lysine isopeptide (Lys-Gly) (interchain with G-Cter in SUMO2) cross-link involves residue lysine 245.

It belongs to the eukaryotic ribosomal protein eL8 family. As to quaternary structure, component of the large ribosomal subunit. Interacts with CRY1. Interacts with DICER1, AGO2, TARBP2, MOV10 and EIF6; they form a large RNA-induced silencing complex (RISC).

It localises to the cytoplasm. Functionally, component of the large ribosomal subunit. The ribosome is a large ribonucleoprotein complex responsible for the synthesis of proteins in the cell. This Rattus norvegicus (Rat) protein is Large ribosomal subunit protein eL8 (Rpl7a).